Here is a 99-residue protein sequence, read N- to C-terminus: N(2)-fixation sustaining protein CowN (99 aa).

This sequence belongs to the CowN family.

Is required to sustain N(2)-dependent growth in the presence of low levels of carbon monoxide (CO). Probably acts by protecting the N(2) fixation ability of the nitrogenase complex, which is inactivated in the presence of CO. This Magnetococcus marinus (strain ATCC BAA-1437 / JCM 17883 / MC-1) protein is N(2)-fixation sustaining protein CowN.